An 81-amino-acid polypeptide reads, in one-letter code: MAHKTGQSSSSNGRESKSKRLGVKTFGGQKVLAGTIIIRQRGTRLHAGRNVGTGRDWTLFALKDGVVKFDKPHRRVEIVAS.

Residues 1 to 22 (MAHKTGQSSSSNGRESKSKRLG) form a disordered region.

This sequence belongs to the bacterial ribosomal protein bL27 family.

The sequence is that of Large ribosomal subunit protein bL27 from Opitutus terrae (strain DSM 11246 / JCM 15787 / PB90-1).